A 308-amino-acid polypeptide reads, in one-letter code: Serine/threonine-protein phosphatase 4 catalytic subunit (308 aa).

Mn(2+)-binding residues include D51, H53, D79, and N111. Catalysis depends on H112, which acts as the Proton donor. Residues H161 and H235 each coordinate Mn(2+). L308 carries the post-translational modification Leucine methyl ester.

The protein belongs to the PPP phosphatase family. PP-4 (PP-X) subfamily. As to quaternary structure, catalytic subunit of the histone H2A phosphatase complex (HTP-C) containing PPH3, PSY2 and PSY4. Requires Mn(2+) as cofactor.

The protein localises to the cytoplasm. It is found in the nucleus. The catalysed reaction is O-phospho-L-seryl-[protein] + H2O = L-seryl-[protein] + phosphate. The enzyme catalyses O-phospho-L-threonyl-[protein] + H2O = L-threonyl-[protein] + phosphate. Forms the histone H2A phosphatase complex in association with the regulatory subunits PSY2 and PSY4, which dephosphorylates H2AS128ph (gamma-H2A) that has been displaced from sites of DNA lesions in the double-stranded DNA break repair process. Dephosphorylation is necessary for efficient recovery from the DNA damage checkpoint. The sequence is that of Serine/threonine-protein phosphatase 4 catalytic subunit (PPH3) from Kluyveromyces lactis (strain ATCC 8585 / CBS 2359 / DSM 70799 / NBRC 1267 / NRRL Y-1140 / WM37) (Yeast).